The primary structure comprises 168 residues: Thiosulfate dehydrogenase [quinone] small subunit (168 aa).

The chain crosses the membrane as a helical span at residues 6-26; it reads IIGIIFAILVVGWILATGQWA.

In terms of assembly, heterodimer of a large and a small subunit in a 2:2 stoichiometry. TQO may associate with the terminal oxidase formed by doxBCE. Post-translationally, the N-terminus is blocked. Glycosylated.

It localises to the cell membrane. It carries out the reaction 6-decylubiquinone + 2 thiosulfate = 6-decylubiquinol + tetrathionate. Its activity is regulated as follows. Inhibited by sulfite, metabisulfite and dithonite. TQO plays a role in sulfur oxidation and is proposed to couple sulfur oxidation to dioxygen reduction; caldariellaquinone or sulfolobus quinone seem to serve to transfer electrons to the electron transport chain terminal oxidase formed by DoxBCE. The polypeptide is Thiosulfate dehydrogenase [quinone] small subunit (doxA) (Acidianus ambivalens (Desulfurolobus ambivalens)).